The primary structure comprises 432 residues: Alpha-enolase (432 aa).

Ser40 is a Mg(2+) binding site. His158 and Glu167 together coordinate substrate. Residue Glu210 is the Proton donor of the active site. Mg(2+) contacts are provided by Asp245, Glu293, and Asp318. Positions 293 and 318 each coordinate substrate. The active-site Proton acceptor is Lys343. Substrate is bound by residues 370–373 and Lys394; that span reads SHRS.

It belongs to the enolase family. As to quaternary structure, dimer. Mg(2+) is required as a cofactor.

The protein resides in the cytoplasm. It carries out the reaction (2R)-2-phosphoglycerate = phosphoenolpyruvate + H2O. The protein operates within carbohydrate degradation; glycolysis; pyruvate from D-glyceraldehyde 3-phosphate: step 4/5. Multifunctional enzyme that, as well as its role in glycolysis, plays a part in various processes such as growth control, hypoxia tolerance and allergic responses. This Thunnus albacares (Yellowfin tuna) protein is Alpha-enolase.